Here is a 273-residue protein sequence, read N- to C-terminus: NAD(P)H-hydrate epimerase (273 aa).

Residues 18-257 form the YjeF N-terminal domain; the sequence is ALKLDEDLIN…LLAMEYDVQE (240 aa). 71-75 serves as a coordination point for (6S)-NADPHX; the sequence is NNGGD. Positions 72 and 146 each coordinate K(+). Residues 150–157, Y162, and D188 contribute to the (6S)-NADPHX site; that span reads GFSFHGGP. S191 is a K(+) binding site.

The protein belongs to the NnrE/AIBP family. It depends on K(+) as a cofactor.

The catalysed reaction is (6R)-NADHX = (6S)-NADHX. It catalyses the reaction (6R)-NADPHX = (6S)-NADPHX. Catalyzes the epimerization of the S- and R-forms of NAD(P)HX, a damaged form of NAD(P)H that is a result of enzymatic or heat-dependent hydration. This is a prerequisite for the S-specific NAD(P)H-hydrate dehydratase to allow the repair of both epimers of NAD(P)HX. This is NAD(P)H-hydrate epimerase from Giardia intestinalis (strain ATCC 50803 / WB clone C6) (Giardia lamblia).